Reading from the N-terminus, the 809-residue chain is Penicillin-binding protein 1A (809 aa).

Residues 1–34 (MSDNTKTNSRNKSVKRTKKVKKKKKFGFFKKLFT) are Cytoplasmic-facing. A helical; Signal-anchor for type II membrane protein membrane pass occupies residues 35–55 (ILFCLFILLSVAASGVIFAIV). The Extracellular segment spans residues 56–809 (KTSPNLDING…PNNNTTNTNK (754 aa)). The interval 74–251 (SQLYDDNNNP…PSAYYPFSQN (178 aa)) is transglycosylase. Residue E113 is the Proton donor; for transglycosylase activity of the active site. The segment at 381–664 (AAATLFDYHT…VAEIWGEIMK (284 aa)) is transpeptidase. The Acyl-ester intermediate; for transpeptidase activity role is filled by S422. The tract at residues 694–809 (SPSNLSGDDS…PNNNTTNTNK (116 aa)) is disordered.

The protein in the N-terminal section; belongs to the glycosyltransferase 51 family. It in the C-terminal section; belongs to the transpeptidase family.

Its subcellular location is the cell membrane. It carries out the reaction [GlcNAc-(1-&gt;4)-Mur2Ac(oyl-L-Ala-gamma-D-Glu-L-Lys-D-Ala-D-Ala)](n)-di-trans,octa-cis-undecaprenyl diphosphate + beta-D-GlcNAc-(1-&gt;4)-Mur2Ac(oyl-L-Ala-gamma-D-Glu-L-Lys-D-Ala-D-Ala)-di-trans,octa-cis-undecaprenyl diphosphate = [GlcNAc-(1-&gt;4)-Mur2Ac(oyl-L-Ala-gamma-D-Glu-L-Lys-D-Ala-D-Ala)](n+1)-di-trans,octa-cis-undecaprenyl diphosphate + di-trans,octa-cis-undecaprenyl diphosphate + H(+). The catalysed reaction is Preferential cleavage: (Ac)2-L-Lys-D-Ala-|-D-Ala. Also transpeptidation of peptidyl-alanyl moieties that are N-acyl substituents of D-alanine.. It functions in the pathway cell wall biogenesis; peptidoglycan biosynthesis. In terms of biological role, cell wall formation. Synthesis of cross-linked peptidoglycan from the lipid intermediates. The enzyme has a penicillin-insensitive transglycosylase N-terminal domain (formation of linear glycan strands) and a penicillin-sensitive transpeptidase C-terminal domain (cross-linking of the peptide subunits). This chain is Penicillin-binding protein 1A (pbpA), found in Clostridium acetobutylicum (strain ATCC 824 / DSM 792 / JCM 1419 / IAM 19013 / LMG 5710 / NBRC 13948 / NRRL B-527 / VKM B-1787 / 2291 / W).